The primary structure comprises 307 residues: NAD(+) hydrolase TcpC (307 aa).

A helical membrane pass occupies residues 22 to 42 (YNILFFIFLSIAIPFLLFLAW). The TIR domain maps to 169–303 (THYDFFISHA…EIARELAEIA (135 aa)). Residues 178-179 (AK) and Glu-208 contribute to the NAD(+) site. Glu-244 is a catalytic residue.

As to quaternary structure, interacts with host MYD88. Interacts with host TLR4.

The protein localises to the secreted. The protein resides in the membrane. The catalysed reaction is NAD(+) + H2O = ADP-D-ribose + nicotinamide + H(+). The enzyme catalyses NADP(+) + H2O = ADP-D-ribose 2'-phosphate + nicotinamide + H(+). In terms of biological role, virulence factor that suppresses host Toll-like receptor (TLR)-mediated cytokine production upon infection, thereby increasing bacterial burden in the urinary tract and promoting renal tissue damage. Acts as a NAD(+) hydrolase (NADase) by catalyzing cleavage of NAD(+) into ADP-D-ribose (ADPR) and nicotinamide. Also able to hydrolyze NADP(+), but not other NAD(+)-related molecules. In Escherichia coli O6:H1 (strain CFT073 / ATCC 700928 / UPEC), this protein is NAD(+) hydrolase TcpC.